The primary structure comprises 390 residues: Protein STRICTOSIDINE SYNTHASE-LIKE 3 (390 aa).

The signal sequence occupies residues 1-25 (MAMSILAKIFLVFAIYCAIDPFSHS). Asn95 and Asn108 each carry an N-linked (GlcNAc...) asparagine glycan.

Belongs to the strictosidine synthase family.

It is found in the vacuole. The protein is Protein STRICTOSIDINE SYNTHASE-LIKE 3 of Arabidopsis thaliana (Mouse-ear cress).